We begin with the raw amino-acid sequence, 212 residues long: Peptide methionine sulfoxide reductase MsrA (212 aa).

Cys-52 is a catalytic residue.

The protein belongs to the MsrA Met sulfoxide reductase family.

The enzyme catalyses L-methionyl-[protein] + [thioredoxin]-disulfide + H2O = L-methionyl-(S)-S-oxide-[protein] + [thioredoxin]-dithiol. It carries out the reaction [thioredoxin]-disulfide + L-methionine + H2O = L-methionine (S)-S-oxide + [thioredoxin]-dithiol. Its function is as follows. Has an important function as a repair enzyme for proteins that have been inactivated by oxidation. Catalyzes the reversible oxidation-reduction of methionine sulfoxide in proteins to methionine. This is Peptide methionine sulfoxide reductase MsrA from Salmonella paratyphi A (strain AKU_12601).